A 235-amino-acid polypeptide reads, in one-letter code: Type II secretion system protein N (235 aa).

Residues 1-34 (MIPRRSSDITIKTRSDVLPFSGASSRWLQRYAPA) lie on the Cytoplasmic side of the membrane. Residues 35–55 (LLAVALIIAMSISLAWQAAGW) form a helical; Signal-anchor for type II membrane protein membrane-spanning segment. The Periplasmic portion of the chain corresponds to 56-235 (LRLQRSPVAV…EPTTTPTESD (180 aa)). A disordered region spans residues 205–235 (DALRQQMEATPIAEPAEEDSSEPTTTPTESD). Over residues 226 to 235 (EPTTTPTESD) the composition is skewed to low complexity.

The protein localises to the cell inner membrane. Functionally, involved in a type II secretion system (T2SS, formerly general secretion pathway, GSP) for the export of proteins. Required for the translocation of a variety of enzymes across the outer membrane. This chain is Type II secretion system protein N (xcpP), found in Pseudomonas aeruginosa (strain ATCC 15692 / DSM 22644 / CIP 104116 / JCM 14847 / LMG 12228 / 1C / PRS 101 / PAO1).